A 173-amino-acid polypeptide reads, in one-letter code: Crossover junction endodeoxyribonuclease RuvC (173 aa).

Catalysis depends on residues Asp-8, Glu-69, and Asp-141. 3 residues coordinate Mg(2+): Asp-8, Glu-69, and Asp-141.

It belongs to the RuvC family. As to quaternary structure, homodimer which binds Holliday junction (HJ) DNA. The HJ becomes 2-fold symmetrical on binding to RuvC with unstacked arms; it has a different conformation from HJ DNA in complex with RuvA. In the full resolvosome a probable DNA-RuvA(4)-RuvB(12)-RuvC(2) complex forms which resolves the HJ. It depends on Mg(2+) as a cofactor.

The protein localises to the cytoplasm. The catalysed reaction is Endonucleolytic cleavage at a junction such as a reciprocal single-stranded crossover between two homologous DNA duplexes (Holliday junction).. Its function is as follows. The RuvA-RuvB-RuvC complex processes Holliday junction (HJ) DNA during genetic recombination and DNA repair. Endonuclease that resolves HJ intermediates. Cleaves cruciform DNA by making single-stranded nicks across the HJ at symmetrical positions within the homologous arms, yielding a 5'-phosphate and a 3'-hydroxyl group; requires a central core of homology in the junction. The consensus cleavage sequence is 5'-(A/T)TT(C/G)-3'. Cleavage occurs on the 3'-side of the TT dinucleotide at the point of strand exchange. HJ branch migration catalyzed by RuvA-RuvB allows RuvC to scan DNA until it finds its consensus sequence, where it cleaves and resolves the cruciform DNA. This chain is Crossover junction endodeoxyribonuclease RuvC, found in Stenotrophomonas maltophilia (strain K279a).